The following is a 401-amino-acid chain: Propionate kinase (401 aa).

Positions 11 and 18 each coordinate ATP. Residue Asn11 coordinates Mg(2+). Arg86 contacts substrate. Asp143 (proton donor/acceptor) is an active-site residue. ATP is bound by residues His175, 203–207 (HLGNG), 278–280 (DLR), and 326–330 (GIGEN).

Belongs to the acetokinase family. TdcD subfamily. Homodimer. The cofactor is Mg(2+).

It catalyses the reaction propanoate + ATP = propanoyl phosphate + ADP. The protein operates within amino-acid degradation; L-threonine degradation via propanoate pathway; propanoate from L-threonine: step 4/4. In terms of biological role, catalyzes the conversion of propionyl phosphate and ADP to propionate and ATP. This is Propionate kinase from Klebsiella pneumoniae (strain 342).